A 264-amino-acid chain; its full sequence is Rano class II histocompatibility antigen, D-1 beta chain (264 aa).

The first 26 residues, 1–26 (MVWLARDSCVAAVILLLTVLSPPVAL), serve as a signal peptide directing secretion. The interval 27-120 (VRDPTPRFLE…EISESFLVPR (94 aa)) is beta-1. Topologically, residues 27 to 226 (VRDPTPRFLE…AQSTSAQNKK (200 aa)) are extracellular. 2 disulfides stabilise this stretch: cysteine 42/cysteine 106 and cysteine 144/cysteine 200. N-linked (GlcNAc...) asparagine glycosylation occurs at asparagine 46. Residues 121 to 215 (TVEPKVTVYP…SLPSPVRVEW (95 aa)) form a beta-2 region. The Ig-like C1-type domain maps to 124–228 (PKVTVYPSKT…STSAQNKKMS (105 aa)). A connecting peptide region spans residues 216 to 226 (KAQSTSAQNKK). A helical membrane pass occupies residues 227–248 (MSGVGGIVLGLLFLGAGLFVYF). Over 249–264 (RNQKGQSGLQPTGLLN) the chain is Cytoplasmic.

It belongs to the MHC class II family.

It localises to the membrane. Involved in the presentation of foreign antigens to the immune system. In Rattus norvegicus (Rat), this protein is Rano class II histocompatibility antigen, D-1 beta chain (RT1-Db1).